The following is a 370-amino-acid chain: UDP-N-acetylglucosamine--N-acetylmuramyl-(pentapeptide) pyrophosphoryl-undecaprenol N-acetylglucosamine transferase (370 aa).

Residues 15 to 17 (TGG), asparagine 129, arginine 171, serine 200, isoleucine 256, and glutamine 301 each bind UDP-N-acetyl-alpha-D-glucosamine.

It belongs to the glycosyltransferase 28 family. MurG subfamily.

The protein resides in the cell membrane. It carries out the reaction di-trans,octa-cis-undecaprenyl diphospho-N-acetyl-alpha-D-muramoyl-L-alanyl-D-glutamyl-meso-2,6-diaminopimeloyl-D-alanyl-D-alanine + UDP-N-acetyl-alpha-D-glucosamine = di-trans,octa-cis-undecaprenyl diphospho-[N-acetyl-alpha-D-glucosaminyl-(1-&gt;4)]-N-acetyl-alpha-D-muramoyl-L-alanyl-D-glutamyl-meso-2,6-diaminopimeloyl-D-alanyl-D-alanine + UDP + H(+). It functions in the pathway cell wall biogenesis; peptidoglycan biosynthesis. Functionally, cell wall formation. Catalyzes the transfer of a GlcNAc subunit on undecaprenyl-pyrophosphoryl-MurNAc-pentapeptide (lipid intermediate I) to form undecaprenyl-pyrophosphoryl-MurNAc-(pentapeptide)GlcNAc (lipid intermediate II). This is UDP-N-acetylglucosamine--N-acetylmuramyl-(pentapeptide) pyrophosphoryl-undecaprenol N-acetylglucosamine transferase from Caldicellulosiruptor saccharolyticus (strain ATCC 43494 / DSM 8903 / Tp8T 6331).